Here is a 581-residue protein sequence, read N- to C-terminus: Proline--tRNA ligase (581 aa).

This sequence belongs to the class-II aminoacyl-tRNA synthetase family. ProS type 1 subfamily. Homodimer.

It localises to the cytoplasm. The enzyme catalyses tRNA(Pro) + L-proline + ATP = L-prolyl-tRNA(Pro) + AMP + diphosphate. Its function is as follows. Catalyzes the attachment of proline to tRNA(Pro) in a two-step reaction: proline is first activated by ATP to form Pro-AMP and then transferred to the acceptor end of tRNA(Pro). As ProRS can inadvertently accommodate and process non-cognate amino acids such as alanine and cysteine, to avoid such errors it has two additional distinct editing activities against alanine. One activity is designated as 'pretransfer' editing and involves the tRNA(Pro)-independent hydrolysis of activated Ala-AMP. The other activity is designated 'posttransfer' editing and involves deacylation of mischarged Ala-tRNA(Pro). The misacylated Cys-tRNA(Pro) is not edited by ProRS. In Kosmotoga olearia (strain ATCC BAA-1733 / DSM 21960 / TBF 19.5.1), this protein is Proline--tRNA ligase.